The sequence spans 86 residues: Allergen Api g 5 (86 aa).

Asn-62 is a glycosylation site (N-linked (GlcNAc...) asparagine).

The protein belongs to the oxygen-dependent FAD-linked oxidoreductase family. The cofactor is FAD. Carries MUXF and MMXF, two complex N-linked glycans with alpha-1,3-fucose and beta-1,2-xylose residues in their structures. MMXF is added to Asn-62.

The protein is Allergen Api g 5 of Apium graveolens (Celery).